Consider the following 157-residue polypeptide: Endoribonuclease YbeY (157 aa).

3 residues coordinate Zn(2+): histidine 122, histidine 126, and histidine 132.

The protein belongs to the endoribonuclease YbeY family. Zn(2+) serves as cofactor.

The protein localises to the cytoplasm. Its function is as follows. Single strand-specific metallo-endoribonuclease involved in late-stage 70S ribosome quality control and in maturation of the 3' terminus of the 16S rRNA. This chain is Endoribonuclease YbeY, found in Lysinibacillus sphaericus (strain C3-41).